Here is a 264-residue protein sequence, read N- to C-terminus: Short chain dehydrogenase CPUR_05429 (264 aa).

NADP(+)-binding residues include Ile24, Asp70, Asn97, and Arg130. Active-site proton donor residues include Ser146 and Ser147. NADP(+) is bound by residues Tyr161, Lys165, and Thr196. Catalysis depends on Tyr161, which acts as the Proton acceptor. Lys165 (lowers pKa of active site Tyr) is an active-site residue.

This sequence belongs to the short-chain dehydrogenases/reductases (SDR) family.

The protein operates within pigment biosynthesis. Short chain dehydrogenase; part of the ergochrome gene cluster responsible for the typical purple-black color of the ergot sclerotia. The ergochrome gene cluster produces several ergot pigments including the yellow ergochrome secalonic acid and its derivatives, as well as the red anthraquinones endocrocin and clavorubin. The pathway begins with the synthesis of atrochrysone thioester by the polyketide synthase (PKS) CPUR_05437. The atrochrysone carboxyl ACP thioesterase CPUR_05436 then breaks the thioester bond and releases the atrochrysone carboxylic acid from CPUR_05437. The atrochrysone carboxylic acid is then converted to atrochrysone which is further transformed into emodin anthrone. The next step is performed by the anthrone oxygenase CPUR_05434 that catalyzes the oxidation of emodinanthrone to emodin. Emodin is further modified to yield monodictyphenone via several steps involving CPUR_05427, CPUR_05428, CPUR_05429 and CPUR_05430. The short chain dehydrogenase/reductase CPUR_05418 then catalyzes the C-5 ketoreduction to give the xanthone skeleton of the monomeric units. Ergochromes formation requires further dimerization steps of different xanthone units, probably catalyzed by the cytochrome P450 monooxygenase CPUR_05419. CPUR_05425, CPUR_05426 and CPUR_05431 are unique to Claviceps, thus it is likely that they are involved in further modification of xanthone units or in their dimerization. The yellow ergochromes and the red anthraquinone pigments endocrocin and clavorubin are products from the same PKS derived precursors and the latter are likely shunt products in the pathway of xanthone biosynthesis. It is proposed that atrochrysone carboxylic acid released from the PKS CPUR_05437 can also be converted to endocrocin anthrone which is further oxidized into endocrocin by CPUR_05435. Endocrocin could be then modified to clavorubin, possibly by CPUR_05423 and CPUR_05431. Clavorubin is the principal anthraquinone metabolite produced by the cluster with a much higher yield compared to endocrocin. This Claviceps purpurea (strain 20.1) (Ergot fungus) protein is Short chain dehydrogenase CPUR_05429.